Consider the following 252-residue polypeptide: Indole-3-glycerol phosphate synthase (252 aa).

This sequence belongs to the TrpC family.

It carries out the reaction 1-(2-carboxyphenylamino)-1-deoxy-D-ribulose 5-phosphate + H(+) = (1S,2R)-1-C-(indol-3-yl)glycerol 3-phosphate + CO2 + H2O. It participates in amino-acid biosynthesis; L-tryptophan biosynthesis; L-tryptophan from chorismate: step 4/5. This is Indole-3-glycerol phosphate synthase from Bacillus licheniformis (strain ATCC 14580 / DSM 13 / JCM 2505 / CCUG 7422 / NBRC 12200 / NCIMB 9375 / NCTC 10341 / NRRL NRS-1264 / Gibson 46).